The primary structure comprises 201 residues: Recombination protein RecR (201 aa).

The segment at 59-74 (CSRCQNFCEAELCSIC) adopts a C4-type zinc-finger fold. In terms of domain architecture, Toprim spans 82 to 177 (RVLCVVESPT…PVSRIAHGIP (96 aa)).

Belongs to the RecR family.

Functionally, may play a role in DNA repair. It seems to be involved in an RecBC-independent recombinational process of DNA repair. It may act with RecF and RecO. This is Recombination protein RecR from Hahella chejuensis (strain KCTC 2396).